Consider the following 134-residue polypeptide: Large ribosomal subunit protein uL16c (134 aa).

Positions 1–17 (MLSPKRTRFRKQHRGRM) are enriched in basic residues. Residues 1-21 (MLSPKRTRFRKQHRGRMKGIS) are disordered.

It belongs to the universal ribosomal protein uL16 family. Part of the 50S ribosomal subunit.

The protein localises to the plastid. It localises to the chloroplast. The polypeptide is Large ribosomal subunit protein uL16c (Solanum bulbocastanum (Wild potato)).